The following is a 162-amino-acid chain: Large ribosomal subunit protein uL15 (162 aa).

Basic and acidic residues predominate over residues 1-13 (MKLNEIRDNEGAT). The interval 1–37 (MKLNEIRDNEGATKNRMRVGRGIGSGKGKTAGRGVKG) is disordered. Positions 21 to 35 (RGIGSGKGKTAGRGV) are enriched in gly residues.

Belongs to the universal ribosomal protein uL15 family. In terms of assembly, part of the 50S ribosomal subunit.

Binds to the 23S rRNA. This Methylobacterium nodulans (strain LMG 21967 / CNCM I-2342 / ORS 2060) protein is Large ribosomal subunit protein uL15.